Reading from the N-terminus, the 1004-residue chain is 2-oxoglutarate dehydrogenase E1 component (1004 aa).

This sequence belongs to the alpha-ketoglutarate dehydrogenase family. Homodimer. Part of the 2-oxoglutarate dehydrogenase (OGDH) complex composed of E1 (2-oxoglutarate dehydrogenase), E2 (dihydrolipoamide succinyltransferase) and E3 (dihydrolipoamide dehydrogenase); the complex contains multiple copies of the three enzymatic components (E1, E2 and E3). Thiamine diphosphate is required as a cofactor.

The enzyme catalyses N(6)-[(R)-lipoyl]-L-lysyl-[protein] + 2-oxoglutarate + H(+) = N(6)-[(R)-S(8)-succinyldihydrolipoyl]-L-lysyl-[protein] + CO2. Functionally, E1 component of the 2-oxoglutarate dehydrogenase (OGDH) complex which catalyzes the decarboxylation of 2-oxoglutarate, the first step in the conversion of 2-oxoglutarate to succinyl-CoA and CO(2). This is 2-oxoglutarate dehydrogenase E1 component from Brucella abortus (strain S19).